Consider the following 124-residue polypeptide: Flagellar transcriptional regulator FlhD (124 aa).

Belongs to the FlhD family. As to quaternary structure, homodimer; disulfide-linked. Forms a heterohexamer composed of two FlhC and four FlhD subunits. Each FlhC binds a FlhD dimer, forming a heterotrimer, and a hexamer assembles by dimerization of two heterotrimers.

It localises to the cytoplasm. Functionally, functions in complex with FlhC as a master transcriptional regulator that regulates transcription of several flagellar and non-flagellar operons by binding to their promoter region. Activates expression of class 2 flagellar genes, including fliA, which is a flagellum-specific sigma factor that turns on the class 3 genes. Also regulates genes whose products function in a variety of physiological pathways. This chain is Flagellar transcriptional regulator FlhD, found in Pectobacterium carotovorum (Erwinia carotovora).